Consider the following 209-residue polypeptide: Ribosomal RNA large subunit methyltransferase E (209 aa).

Residues G63, W65, D83, D99, and D124 each coordinate S-adenosyl-L-methionine. K164 serves as the catalytic Proton acceptor.

Belongs to the class I-like SAM-binding methyltransferase superfamily. RNA methyltransferase RlmE family.

Its subcellular location is the cytoplasm. The catalysed reaction is uridine(2552) in 23S rRNA + S-adenosyl-L-methionine = 2'-O-methyluridine(2552) in 23S rRNA + S-adenosyl-L-homocysteine + H(+). In terms of biological role, specifically methylates the uridine in position 2552 of 23S rRNA at the 2'-O position of the ribose in the fully assembled 50S ribosomal subunit. This Shewanella piezotolerans (strain WP3 / JCM 13877) protein is Ribosomal RNA large subunit methyltransferase E.